A 153-amino-acid polypeptide reads, in one-letter code: MSRAPKLTLNLQFPAARSWPEHKALLPRATVAGWIKAALFADGELTVRFVDADEGRTLNRTYRGKDYSTNVLTFAYAESEDDPVTGDLILCCPVVEKEAAEQGKPLIAHYAHLLVHGTLHAQGYDHEVEEEAEEMEAIETEILAKLGFPDPYQ.

Zn(2+) contacts are provided by His-116, His-120, and His-126.

This sequence belongs to the endoribonuclease YbeY family. Zn(2+) is required as a cofactor.

The protein resides in the cytoplasm. In terms of biological role, single strand-specific metallo-endoribonuclease involved in late-stage 70S ribosome quality control and in maturation of the 3' terminus of the 16S rRNA. This chain is Endoribonuclease YbeY, found in Paraburkholderia phytofirmans (strain DSM 17436 / LMG 22146 / PsJN) (Burkholderia phytofirmans).